We begin with the raw amino-acid sequence, 354 residues long: Peptide-N(4)-(N-acetyl-beta-D-glucosaminyl)asparagine amidase F (354 aa).

The first 40 residues, 1 to 40, serve as a signal peptide directing secretion; that stretch reads MRKLLIFSISAYLMAGIVSCKGVDSATPVTEDRLALNAVN. An intrachain disulfide couples Cys-91 to Cys-96. Catalysis depends on residues Asp-100, Glu-158, and Glu-246. 2 disulfide bridges follow: Cys-244–Cys-248 and Cys-271–Cys-292.

In terms of assembly, monomer.

The catalysed reaction is Hydrolysis of an N(4)-(acetyl-beta-D-glucosaminyl)asparagine residue in which the glucosamine residue may be further glycosylated, to yield a (substituted) N-acetyl-beta-D-glucosaminylamine and a peptide containing an aspartate residue.. Its function is as follows. Cleaves an entire glycan from a glycoprotein. Requires that the glycosylated asparagine moiety (reaction 1) be substituted on its amino (R1) and carboxyl (R2) terminus with a polypeptide chain. In Elizabethkingia miricola (Chryseobacterium miricola), this protein is Peptide-N(4)-(N-acetyl-beta-D-glucosaminyl)asparagine amidase F (ngl).